The chain runs to 214 residues: MSESEDDDIPQLSSHTLAALQEFYAEQKQSVNPRGDDKYNVGVIEENWQLSQFWYSQDTALRLAREAIDAAGEGGRIACVSAPSVYQKLRELCREDSSVYIFEYDRRFAIYGDEFIFYDYNHPLELPERIAAHSFDLVVADPPYLSEECLRKTSETIQFLTRGKILLCTGAIMEEQAAQLLGVKMCKFIPEHSRNLANEFRCYTNYDSGLDCEA.

Residue Ser2 is modified to N-acetylserine. A Phosphoserine modification is found at Ser2.

The protein belongs to the class I-like SAM-binding methyltransferase superfamily. EFM5 family.

The protein localises to the cytoplasm. It catalyses the reaction L-lysyl-[protein] + 3 S-adenosyl-L-methionine = N(6),N(6),N(6)-trimethyl-L-lysyl-[protein] + 3 S-adenosyl-L-homocysteine + 3 H(+). In terms of biological role, protein-lysine methyltransferase that selectively catalyzes the trimethylation of EEF1A at 'Lys-79'. This chain is EEF1A lysine methyltransferase 1, found in Mus musculus (Mouse).